The chain runs to 346 residues: Methylthioribose-1-phosphate isomerase (346 aa).

Residues 44-46 (RGA), Arg87, and Gln194 each bind substrate. Asp235 (proton donor) is an active-site residue. 245–246 (NK) is a binding site for substrate.

The protein belongs to the eIF-2B alpha/beta/delta subunits family. MtnA subfamily.

The enzyme catalyses 5-(methylsulfanyl)-alpha-D-ribose 1-phosphate = 5-(methylsulfanyl)-D-ribulose 1-phosphate. It participates in amino-acid biosynthesis; L-methionine biosynthesis via salvage pathway; L-methionine from S-methyl-5-thio-alpha-D-ribose 1-phosphate: step 1/6. Its function is as follows. Catalyzes the interconversion of methylthioribose-1-phosphate (MTR-1-P) into methylthioribulose-1-phosphate (MTRu-1-P). This Desulforamulus reducens (strain ATCC BAA-1160 / DSM 100696 / MI-1) (Desulfotomaculum reducens) protein is Methylthioribose-1-phosphate isomerase.